Consider the following 168-residue polypeptide: S-ribosylhomocysteine lyase (168 aa).

Residues histidine 54, histidine 58, and cysteine 128 each coordinate Fe cation.

Belongs to the LuxS family. In terms of assembly, homodimer. Requires Fe cation as cofactor.

The enzyme catalyses S-(5-deoxy-D-ribos-5-yl)-L-homocysteine = (S)-4,5-dihydroxypentane-2,3-dione + L-homocysteine. Its function is as follows. Involved in the synthesis of autoinducer 2 (AI-2) which is secreted by bacteria and is used to communicate both the cell density and the metabolic potential of the environment. The regulation of gene expression in response to changes in cell density is called quorum sensing. Catalyzes the transformation of S-ribosylhomocysteine (RHC) to homocysteine (HC) and 4,5-dihydroxy-2,3-pentadione (DPD). The polypeptide is S-ribosylhomocysteine lyase (Neisseria gonorrhoeae (strain ATCC 700825 / FA 1090)).